The primary structure comprises 335 residues: GTPase Obg (335 aa).

The 158-residue stretch at 1–158 (MFLDQITIEL…RQVELELKLI (158 aa)) folds into the Obg domain. Residues 159–334 (ADIGLVGFPN…LNSLFTNRLS (176 aa)) enclose the OBG-type G domain. GTP contacts are provided by residues 165–172 (GFPNAGKS), 190–194 (FTTLQ), 215–218 (DIPG), 285–288 (NKID), and 315–317 (SGL). Serine 172 and threonine 192 together coordinate Mg(2+).

Belongs to the TRAFAC class OBG-HflX-like GTPase superfamily. OBG GTPase family. As to quaternary structure, monomer. Mg(2+) serves as cofactor.

Its subcellular location is the cytoplasm. An essential GTPase which binds GTP, GDP and possibly (p)ppGpp with moderate affinity, with high nucleotide exchange rates and a fairly low GTP hydrolysis rate. Plays a role in control of the cell cycle, stress response, ribosome biogenesis and in those bacteria that undergo differentiation, in morphogenesis control. The polypeptide is GTPase Obg (Chlamydia caviae (strain ATCC VR-813 / DSM 19441 / 03DC25 / GPIC) (Chlamydophila caviae)).